The sequence spans 171 residues: uncharacterized protein (171 aa).

A signal peptide spans 1–24 (MIFDSLTMTQSSLSLLLLTGAIFS). Residues 25 to 70 (ISALYLTLFHRCATFSATSDLFLLVPLKFVSRDINDRLKTHYHHSC) lie on the Extracellular side of the membrane. A helical membrane pass occupies residues 71 to 91 (LGSPFLCIIFLFISPLLNYHF). The Cytoplasmic portion of the chain corresponds to 92 to 140 (RSLVRPPKIHQKGSIPTLTKNAETRCSHHLKQAAATGEVCKVVVIIKGH). The helical transmembrane segment at 141-161 (ILKDCSIFFFIIFPLIYPLFI) threads the bilayer. At 162-171 (NCSSKYNGLQ) the chain is on the extracellular side.

It is found in the membrane. This is an uncharacterized protein from Saccharomyces cerevisiae (strain ATCC 204508 / S288c) (Baker's yeast).